We begin with the raw amino-acid sequence, 369 residues long: 4-hydroxyproline betaine 2-epimerase (369 aa).

Substrate-binding residues include tyrosine 56 and glutamine 162. Lysine 164 (proton donor/acceptor) is an active-site residue. Positions 194, 219, and 242 each coordinate Mg(2+). The active-site Proton donor/acceptor is the lysine 266. Alanine 295 serves as a coordination point for substrate.

Belongs to the mandelate racemase/muconate lactonizing enzyme family. Mg(2+) serves as cofactor.

The catalysed reaction is trans-4-hydroxy-L-proline betaine = cis-4-hydroxy-D-proline betaine. It carries out the reaction L-proline betaine = D-proline betaine. Catalyzes the 2-epimerization of trans-4-hydroxy-L-proline betaine (tHyp-B) to cis-4-hydroxy-D-proline betaine (cHyp-B). Is involved in a catabolic pathway that degrades tHyp-B to alpha-ketoglutarate. This pathway would permit the utilization of tHyp-B as a carbon and nitrogen source in the absence of osmotic stress, since tHyp-B functions as an osmolyte and is not catabolized when it is needed as osmoprotectant. Can also catalyze the racemization of L-proline betaine. The polypeptide is 4-hydroxyproline betaine 2-epimerase (hpbD) (Paracoccus denitrificans (strain Pd 1222)).